Reading from the N-terminus, the 587-residue chain is Xyloglucan-specific endo-beta-1,4-glucanase BoGH9A (587 aa).

The first 19 residues, 1-19 (MKIVRYIALFGILSGLAVA), serve as a signal peptide directing secretion. Cysteine 20 carries N-palmitoyl cysteine lipidation. Cysteine 20 carries S-diacylglycerol cysteine lipidation. The active-site Nucleophile is aspartate 185. Residues histidine 511 and aspartate 553 contribute to the active site. The Proton donor role is filled by glutamate 562.

This sequence belongs to the glycosyl hydrolase 9 (cellulase E) family.

It localises to the cell outer membrane. It carries out the reaction xyloglucan + H2O = xyloglucan oligosaccharides.. Its pathway is glucan metabolism; xyloglucan degradation. Functionally, catalyzes endohydrolysis of 1,4-beta-D-glucosidic linkages in xyloglucan with retention of the beta-configuration of the glycosyl residues in xyloglucan degradation. Cleaves the backbone of the 3 major types of natural xyloglucans (seed galactoxyloglucan from tamarind kernel, dicot fucogalactoxyloglucan from lettuce leaves, and solanaceous arabinogalactoxyloglucan from tomato fruit), to produce xyloglucan oligosaccharides. May be superfluous in xyloglucan degradation compared to BoGH5A (AC A7LXT7), the other Xyloglucan-specific endo-beta-1,4-glucanase. The sequence is that of Xyloglucan-specific endo-beta-1,4-glucanase BoGH9A from Bacteroides ovatus (strain ATCC 8483 / DSM 1896 / JCM 5824 / BCRC 10623 / CCUG 4943 / NCTC 11153).